The following is a 954-amino-acid chain: SWI/SNF-related matrix-associated actin-dependent regulator of chromatin subfamily A-like protein 1 (954 aa).

2 disordered regions span residues 1–20 (MSLP…RQKA) and 27–238 (KLLA…NSQK). Ser2 bears the N-acetylserine mark. Residues 3–34 (LPLTEEQRKKIEENRQKALARRAEKLLAEQHQ) are a coiled coil. Residues 5–30 (LTEEQRKKIEENRQKALARRAEKLLA) are mediates interaction with RPA2. A compositionally biased stretch (basic and acidic residues) spans 7-20 (EEQRKKIEENRQKA). Polar residues predominate over residues 72-83 (KQQNLSSSSNAD). Phosphoserine is present on residues Ser112, Ser123, Ser129, and Ser151. Polar residues-rich tracts occupy residues 171 to 183 (KSSQ…SSGQ) and 197 to 238 (ASPS…NSQK). Ser198 bears the Phosphoserine mark. 2 consecutive HARP domains span residues 226-303 (SGSS…QPLE) and 327-398 (SLSF…DPLP). One can recognise a Helicase ATP-binding domain in the interval 445 to 600 (NFAIAKGGRL…YTQIIAVKPT (156 aa)). Position 458–465 (458–465 (DDMGLGKT)) interacts with ATP. A DESH box motif is present at residues 549-552 (DESH). The Nuclear localization signal signature appears at 644–661 (RRLKSDVLSQLPAKQRKI). Residues 716–869 (YILDLLESGR…ETNFSEMTES (154 aa)) enclose the Helicase C-terminal domain. Positions 904 to 934 (ESFDPGSASGTSGSSSQNMGDTLDESSLTAS) are disordered. Over residues 909–919 (GSASGTSGSSS) the composition is skewed to low complexity. The span at 920–934 (QNMGDTLDESSLTAS) shows a compositional bias: polar residues.

The protein belongs to the SNF2/RAD54 helicase family. SMARCAL1 subfamily. In terms of assembly, interacts with RPA2; the interaction is direct and mediates the recruitment by the RPA complex of SMARCAL1 to sites of DNA damage. Post-translationally, DNA damage-regulated phosphorylation by kinases that may include ATM, ATR and PRKDC. In terms of tissue distribution, ubiquitously expressed, with high levels in testis.

Its subcellular location is the nucleus. The catalysed reaction is ATP + H2O = ADP + phosphate + H(+). ATP-dependent annealing helicase that binds selectively to fork DNA relative to ssDNA or dsDNA and catalyzes the rewinding of the stably unwound DNA. Rewinds single-stranded DNA bubbles that are stably bound by replication protein A (RPA). Acts throughout the genome to reanneal stably unwound DNA, performing the opposite reaction of many enzymes, such as helicases and polymerases, that unwind DNA. May play an important role in DNA damage response by acting at stalled replication forks. In Homo sapiens (Human), this protein is SWI/SNF-related matrix-associated actin-dependent regulator of chromatin subfamily A-like protein 1.